Reading from the N-terminus, the 477-residue chain is SH3 domain-binding protein 5 homolog (477 aa).

Residues Gln-12 to Glu-95 adopt a coiled-coil conformation. A phosphoserine mark is found at Ser-113 and Ser-115. Positions Asn-122 to Arg-221 form a coiled coil. Disordered stretches follow at residues Glu-224 to Ser-258 and Gly-276 to Ala-306. Positions Glu-291–Gly-305 are enriched in acidic residues.

The protein belongs to the SH3BP5 family.

The chain is SH3 domain-binding protein 5 homolog (pcs) from Drosophila melanogaster (Fruit fly).